We begin with the raw amino-acid sequence, 287 residues long: Phosphatidylserine decarboxylase proenzyme (287 aa).

Catalysis depends on charge relay system; for autoendoproteolytic cleavage activity residues D89, H146, and S252. Residue S252 is the Schiff-base intermediate with substrate; via pyruvic acid; for decarboxylase activity of the active site. Pyruvic acid (Ser); by autocatalysis is present on S252.

The protein belongs to the phosphatidylserine decarboxylase family. PSD-B subfamily. Prokaryotic type I sub-subfamily. As to quaternary structure, heterodimer of a large membrane-associated beta subunit and a small pyruvoyl-containing alpha subunit. Pyruvate is required as a cofactor. Is synthesized initially as an inactive proenzyme. Formation of the active enzyme involves a self-maturation process in which the active site pyruvoyl group is generated from an internal serine residue via an autocatalytic post-translational modification. Two non-identical subunits are generated from the proenzyme in this reaction, and the pyruvate is formed at the N-terminus of the alpha chain, which is derived from the carboxyl end of the proenzyme. The autoendoproteolytic cleavage occurs by a canonical serine protease mechanism, in which the side chain hydroxyl group of the serine supplies its oxygen atom to form the C-terminus of the beta chain, while the remainder of the serine residue undergoes an oxidative deamination to produce ammonia and the pyruvoyl prosthetic group on the alpha chain. During this reaction, the Ser that is part of the protease active site of the proenzyme becomes the pyruvoyl prosthetic group, which constitutes an essential element of the active site of the mature decarboxylase.

It localises to the cell membrane. It carries out the reaction a 1,2-diacyl-sn-glycero-3-phospho-L-serine + H(+) = a 1,2-diacyl-sn-glycero-3-phosphoethanolamine + CO2. Its pathway is phospholipid metabolism; phosphatidylethanolamine biosynthesis; phosphatidylethanolamine from CDP-diacylglycerol: step 2/2. Functionally, catalyzes the formation of phosphatidylethanolamine (PtdEtn) from phosphatidylserine (PtdSer). The protein is Phosphatidylserine decarboxylase proenzyme of Shewanella pealeana (strain ATCC 700345 / ANG-SQ1).